A 359-amino-acid chain; its full sequence is tRNA N6-adenosine threonylcarbamoyltransferase (359 aa).

Fe cation-binding residues include His115 and His119. Substrate-binding positions include 137–141 (LVSGG), Asp170, Gly183, and Asn283. Position 311 (Asp311) interacts with Fe cation. The tract at residues 328–359 (APDSLDIAPRSRWPLDEKSAPVFGTGRRGAKA) is disordered.

This sequence belongs to the KAE1 / TsaD family. Fe(2+) serves as cofactor.

It is found in the cytoplasm. It catalyses the reaction L-threonylcarbamoyladenylate + adenosine(37) in tRNA = N(6)-L-threonylcarbamoyladenosine(37) in tRNA + AMP + H(+). Functionally, required for the formation of a threonylcarbamoyl group on adenosine at position 37 (t(6)A37) in tRNAs that read codons beginning with adenine. Is involved in the transfer of the threonylcarbamoyl moiety of threonylcarbamoyl-AMP (TC-AMP) to the N6 group of A37, together with TsaE and TsaB. TsaD likely plays a direct catalytic role in this reaction. The sequence is that of tRNA N6-adenosine threonylcarbamoyltransferase from Brucella suis (strain ATCC 23445 / NCTC 10510).